A 74-amino-acid polypeptide reads, in one-letter code: Putative antitoxin VapB48 (74 aa).

Functionally, possibly the antitoxin component of a type II toxin-antitoxin (TA) system. Its cognate toxin is VapC48 (Potential). This is Putative antitoxin VapB48 (vapB48) from Mycobacterium tuberculosis (strain CDC 1551 / Oshkosh).